A 405-amino-acid chain; its full sequence is MSPYGLNLSLVDEATTCVTPRVPNTSVVLPTGGNGTSPALPIFSMTLGAVSNVLALALLAQVAGRLRRRRSTATFLLFVASLLAIDLAGHVIPGALVLRLYTAGRAPAGGACHFLGGCMVFFGLCPLLLGCGMAVERCVGVTQPLIHAARVSVARARLALALLAAMALAVALLPLVHVGHYELQYPGTWCFISLGPPGGWRQALLAGLFAGLGLAALLAALVCNTLSGLALLRARWRRRRSRRFRENAGPDDRRRWGSRGLRLASASSASSITSTTAALRSSRGGGSARRVHAHDVEMVGQLVGIMVVSCICWSPLLVLVVLAIGGWNSNSLQRPLFLAVRLASWNQILDPWVYILLRQAMLRQLLRLLPLRVSAKGGPTELSLTKSAWEASSLRSSRHSGFSHL.

Topologically, residues 1 to 39 (MSPYGLNLSLVDEATTCVTPRVPNTSVVLPTGGNGTSPA) are extracellular. Residues N7, N24, and N34 are each glycosylated (N-linked (GlcNAc...) asparagine). A helical membrane pass occupies residues 40–62 (LPIFSMTLGAVSNVLALALLAQV). Topologically, residues 63 to 80 (AGRLRRRRSTATFLLFVA) are cytoplasmic. The helical transmembrane segment at 81–99 (SLLAIDLAGHVIPGALVLR) threads the bilayer. Over 100–113 (LYTAGRAPAGGACH) the chain is Extracellular. C112 and C190 are oxidised to a cystine. Residues 114-135 (FLGGCMVFFGLCPLLLGCGMAV) form a helical membrane-spanning segment. Topologically, residues 136 to 157 (ERCVGVTQPLIHAARVSVARAR) are cytoplasmic. The chain crosses the membrane as a helical span at residues 158–179 (LALALLAAMALAVALLPLVHVG). Topologically, residues 180–202 (HYELQYPGTWCFISLGPPGGWRQ) are extracellular. The helical transmembrane segment at 203 to 228 (ALLAGLFAGLGLAALLAALVCNTLSG) threads the bilayer. Residues 229 to 301 (LALLRARWRR…HAHDVEMVGQ (73 aa)) are Cytoplasmic-facing. The helical transmembrane segment at 302–323 (LVGIMVVSCICWSPLLVLVVLA) threads the bilayer. Over 324 to 337 (IGGWNSNSLQRPLF) the chain is Extracellular. Residues 338 to 357 (LAVRLASWNQILDPWVYILL) form a helical membrane-spanning segment. Residues 358 to 405 (RQAMLRQLLRLLPLRVSAKGGPTELSLTKSAWEASSLRSSRHSGFSHL) lie on the Cytoplasmic side of the membrane.

The protein belongs to the G-protein coupled receptor 1 family. In terms of processing, phosphorylated. As to expression, highly abundant in kidney and lung. Found in a lesser extent in spleen, colon, and thymus. Also expressed in uterine myometrium and endometrium.

It localises to the cell membrane. In terms of biological role, receptor for prostaglandin E2 (PGE2). The activity of this receptor is mediated by G(q) proteins which activate a phosphatidylinositol-calcium second messenger system. May play a role as an important modulator of renal function. Implicated the smooth muscle contractile response to PGE2 in various tissues. Isoform 1 and isoform 2 have identical ligand binding properties, but isoform 2 lacks coupling to calcium mobilization and may therefore attenuate the action of PGE2 on tissues. This chain is Prostaglandin E2 receptor EP1 subtype (Ptger1), found in Rattus norvegicus (Rat).